Consider the following 107-residue polypeptide: uncharacterized protein (107 aa).

Residues 88–107 (GSTPWGSGRQVNAARPIGGR) are disordered.

It is found in the virion. This is an uncharacterized protein from Acanthamoeba polyphaga (Amoeba).